The sequence spans 514 residues: MKEELVIFDTTLRDGEQSPGASMTKEEKVRIAKQLEKLRVNVIEAGFPAASQGDFESVQAVASAVKDSTVCGLARAVENDIVRAGEAIKLANSGRIHTFIATSPIHMEKKLKMSPDEVVERAVWAVKRARDFTDNVEFSPEDAGRSELDFLCRVIEAAIDAGATTINIPDTVGYNVPEQFGELFHQLLNRIPNADKAIFSAHCHNDLGLAVANSLAAVKSGARQVECTINGLGERAGNTALEEVVMAVRTRQDWFDVDTRIHTPEILAASRLVAGITGFAVQPNKAIVGTNAFSHESGIHQDGVLKHRETYEIMRAEDVGWSTNKMVLGKHSGRSAFRSRLKELGIEFETEQELSDAFISFKELADRKHEIYDEDIQALVTDNNTRRVENETFRLVALKVGTQTGDAPTATITLWIDGEEKTASSEGGGVVDATFKAIEKLVDSGATLELYSVSNVTNGTDSLGETTVRMEKAGRIVNGQGADTDIVTASAKAYINALNKLIDTGSKEHPQAHV.

The Pyruvate carboxyltransferase domain maps to L5–L267. Mn(2+) is bound by residues D14, H202, H204, and N238. The interval R394–V514 is regulatory domain.

This sequence belongs to the alpha-IPM synthase/homocitrate synthase family. LeuA type 1 subfamily. In terms of assembly, homodimer. It depends on Mn(2+) as a cofactor.

The protein resides in the cytoplasm. The enzyme catalyses 3-methyl-2-oxobutanoate + acetyl-CoA + H2O = (2S)-2-isopropylmalate + CoA + H(+). The protein operates within amino-acid biosynthesis; L-leucine biosynthesis; L-leucine from 3-methyl-2-oxobutanoate: step 1/4. Its function is as follows. Catalyzes the condensation of the acetyl group of acetyl-CoA with 3-methyl-2-oxobutanoate (2-ketoisovalerate) to form 3-carboxy-3-hydroxy-4-methylpentanoate (2-isopropylmalate). The chain is 2-isopropylmalate synthase from Hydrogenovibrio crunogenus (strain DSM 25203 / XCL-2) (Thiomicrospira crunogena).